Reading from the N-terminus, the 985-residue chain is Ankyrin repeat domain-containing protein 24 (985 aa).

ANK repeat units follow at residues Glu-52 to Ser-81, Ala-85 to Ile-114, Ser-118 to Pro-147, Ser-151 to Asp-180, and Gln-184 to Ile-213. Disordered regions lie at residues Arg-243–Ala-293, Ile-311–Glu-360, Gln-386–Glu-412, Tyr-476–Gln-503, and Asp-594–Met-614. Residues Arg-291–Glu-488 are a coiled coil. Basic and acidic residues-rich tracts occupy residues Ile-311–Leu-326 and Glu-349–Glu-360.

In terms of assembly, homodimer. Interacts (via C-terminal domain) with TRIOBP (via C-terminal domain) isoform 4; recruits TRIOBP isoform 4 to stereocilia rootlets. In terms of tissue distribution, expressed in vestibular hair bundles.

It localises to the cell membrane. Its subcellular location is the cell projection. The protein resides in the stereocilium. Functionally, component of the stereocilia rootlet in hair cells of inner ear. Bridges the apical plasma membrane with the lower rootlet and maintains normal distribution of TRIOBP, thereby reinforcing stereocilia insertion points and organizing rootlets for hearing with long-term resilience. In Mus musculus (Mouse), this protein is Ankyrin repeat domain-containing protein 24 (Ankrd24).